The primary structure comprises 427 residues: Glutamate-1-semialdehyde 2,1-aminomutase (427 aa).

Lys-265 is modified (N6-(pyridoxal phosphate)lysine).

This sequence belongs to the class-III pyridoxal-phosphate-dependent aminotransferase family. HemL subfamily. Homodimer. Requires pyridoxal 5'-phosphate as cofactor.

The protein resides in the cytoplasm. The catalysed reaction is (S)-4-amino-5-oxopentanoate = 5-aminolevulinate. The protein operates within porphyrin-containing compound metabolism; protoporphyrin-IX biosynthesis; 5-aminolevulinate from L-glutamyl-tRNA(Glu): step 2/2. This Burkholderia ambifaria (strain MC40-6) protein is Glutamate-1-semialdehyde 2,1-aminomutase.